The sequence spans 291 residues: Small ribosomal subunit protein uS2 (291 aa).

The tract at residues 256–291 (LRGEGTAPAASEEQPAEEPAPAAAEAQTDAAVGTAV) is disordered. Low complexity predominate over residues 261–291 (TAPAASEEQPAEEPAPAAAEAQTDAAVGTAV).

The protein belongs to the universal ribosomal protein uS2 family.

The polypeptide is Small ribosomal subunit protein uS2 (Frankia alni (strain DSM 45986 / CECT 9034 / ACN14a)).